The primary structure comprises 263 residues: Undecaprenyl-diphosphatase (263 aa).

The next 8 helical transmembrane spans lie at 1 to 21 (MSYL…FLPI), 41 to 61 (FTKA…LVLY), 69 to 89 (WGFY…GFVV), 96 to 116 (LMGS…ILIW), 147 to 167 (AIAM…GLTL), 177 to 197 (FSFF…LLKI), 208 to 228 (LLLV…KFFI), and 238 to 258 (GFGY…YTGH).

It belongs to the UppP family.

It localises to the cell inner membrane. It catalyses the reaction di-trans,octa-cis-undecaprenyl diphosphate + H2O = di-trans,octa-cis-undecaprenyl phosphate + phosphate + H(+). Catalyzes the dephosphorylation of undecaprenyl diphosphate (UPP). Confers resistance to bacitracin. This is Undecaprenyl-diphosphatase from Bdellovibrio bacteriovorus (strain ATCC 15356 / DSM 50701 / NCIMB 9529 / HD100).